Consider the following 318-residue polypeptide: cAMP/cGMP dual specificity phosphodiesterase MT0825 (318 aa).

3 residues coordinate Fe cation: Asp-21, His-23, and Asp-63. Residues His-23, Asp-63, and 97 to 98 contribute to the AMP site; that span reads NH. Asp-63, Asn-97, His-169, and His-207 together coordinate Mn(2+). Residue His-209 participates in Fe cation binding. An AMP-binding site is contributed by His-209. The segment at 278 to 318 is C-terminal extension; the sequence is PGQARRKIAESGIFIEPSRRDSLFKHPPMVLTSSAPRSPVD.

This sequence belongs to the cyclic nucleotide phosphodiesterase class-III family. In terms of assembly, homodimer. Requires Fe(3+) as cofactor. The cofactor is Mn(2+).

The protein localises to the cytoplasm. It localises to the cell membrane. It is found in the secreted. The protein resides in the cell wall. Its subcellular location is the cell envelope. It catalyses the reaction a nucleoside 2',3'-cyclic phosphate + H2O = a nucleoside 3'-phosphate + H(+). The enzyme catalyses 2',3'-cyclophospho-AMP + H2O = 3'-AMP + H(+). The catalysed reaction is 2',3'-cyclophospho-GMP + H2O = 3'-GMP + H(+). It carries out the reaction a nucleoside 3',5'-cyclic phosphate + H2O = a nucleoside 5'-phosphate + H(+). It catalyses the reaction 3',5'-cyclic AMP + H2O = AMP + H(+). The enzyme catalyses 3',5'-cyclic GMP + H2O = GMP + H(+). Cyclic nucleotide phosphodiesterase with a dual-specificity for the second messengers cAMP and cGMP. This chain is cAMP/cGMP dual specificity phosphodiesterase MT0825, found in Mycobacterium tuberculosis (strain CDC 1551 / Oshkosh).